The following is a 72-amino-acid chain: Translation initiation factor IF-1 (72 aa).

In terms of domain architecture, S1-like spans 1–72 (MAKDDVIEID…DKGRITFRYK (72 aa)).

This sequence belongs to the IF-1 family. In terms of assembly, component of the 30S ribosomal translation pre-initiation complex which assembles on the 30S ribosome in the order IF-2 and IF-3, IF-1 and N-formylmethionyl-tRNA(fMet); mRNA recruitment can occur at any time during PIC assembly.

The protein resides in the cytoplasm. One of the essential components for the initiation of protein synthesis. Stabilizes the binding of IF-2 and IF-3 on the 30S subunit to which N-formylmethionyl-tRNA(fMet) subsequently binds. Helps modulate mRNA selection, yielding the 30S pre-initiation complex (PIC). Upon addition of the 50S ribosomal subunit IF-1, IF-2 and IF-3 are released leaving the mature 70S translation initiation complex. This is Translation initiation factor IF-1 from Sulfurovum sp. (strain NBC37-1).